The following is a 350-amino-acid chain: MSASPSPSTRADALALARWLFVVAFMVVAIVAVGGITRLTESGVSITEWKPVAGTLPPITDAQWQAEFDAYRQTPQFQLVNGPAGMTLATYKFIFFWEWVHRLLARTIGLVFAAPLAWFWIKRRIPEGYKPRLVALLALGALQGAVGWWMVKSGIVNDVKVSHFRLATHLLVALFTLGGLVWTALDLVALSKGEARSRLRGIGLLALAMLVLQLFYGALVAGLRAGTSAGGGWFNWDAWPLMQGSLYPDGVDWATGAVHALLSDVFLVHFIHRWWAWAVVAVLVVVARKLRKTNRKASIVLHSVFGTQVLLGIFTVWSGVALWIAVLHQFVGALLVAATTWSAHLLGARR.

A run of 8 helical transmembrane segments spans residues 16-36 (LARW…VGGI), 77-97 (FQLV…IFFW), 101-121 (HRLL…WFWI), 136-156 (LLAL…SGIV), 170-190 (LLVA…LVAL), 201-221 (GIGL…ALVA), 265-285 (VFLV…VLVV), and 299-321 (IVLH…SGVA). H272 serves as a coordination point for heme. H328 is a binding site for heme.

Belongs to the COX15/CtaA family. Type 2 subfamily. Interacts with CtaB. It depends on heme b as a cofactor.

The protein localises to the cell membrane. The catalysed reaction is Fe(II)-heme o + 2 A + H2O = Fe(II)-heme a + 2 AH2. Its pathway is porphyrin-containing compound metabolism; heme A biosynthesis; heme A from heme O: step 1/1. Its function is as follows. Catalyzes the conversion of heme O to heme A by two successive hydroxylations of the methyl group at C8. The first hydroxylation forms heme I, the second hydroxylation results in an unstable dihydroxymethyl group, which spontaneously dehydrates, resulting in the formyl group of heme A. The protein is Heme A synthase of Novosphingobium aromaticivorans (strain ATCC 700278 / DSM 12444 / CCUG 56034 / CIP 105152 / NBRC 16084 / F199).